The chain runs to 279 residues: Digeranylgeranylglyceryl phosphate synthase (279 aa).

9 consecutive transmembrane segments (helical) span residues 16–36 (LIAG…LPPI), 40–60 (LLIF…NDYF), 77–99 (GALS…ILIA), 104–121 (FEAF…YLYA), 124–144 (LKPQ…ITPI), 146–166 (GAIA…AFLV), 192–212 (IVWG…ATII), 220–240 (AGIG…LWAA), and 259–279 (LKIA…TKGV).

It belongs to the UbiA prenyltransferase family. DGGGP synthase subfamily. It depends on Mg(2+) as a cofactor.

The protein localises to the cell membrane. The enzyme catalyses sn-3-O-(geranylgeranyl)glycerol 1-phosphate + (2E,6E,10E)-geranylgeranyl diphosphate = 2,3-bis-O-(geranylgeranyl)-sn-glycerol 1-phosphate + diphosphate. It functions in the pathway membrane lipid metabolism; glycerophospholipid metabolism. Its function is as follows. Prenyltransferase that catalyzes the transfer of the geranylgeranyl moiety of geranylgeranyl diphosphate (GGPP) to the C2 hydroxyl of (S)-3-O-geranylgeranylglyceryl phosphate (GGGP). This reaction is the second ether-bond-formation step in the biosynthesis of archaeal membrane lipids. In Thermococcus sibiricus (strain DSM 12597 / MM 739), this protein is Digeranylgeranylglyceryl phosphate synthase.